Reading from the N-terminus, the 324-residue chain is uncharacterized protein (324 aa).

8 helical membrane-spanning segments follow: residues 4–24 (GNKV…PEFM), 63–83 (AALL…EGIL), 106–128 (ALFY…ISFL), 132–151 (WQVQ…SHLL), 179–199 (LADI…AVTL), 209–229 (GLDG…LVIM), 246–266 (LETA…LYTL), and 282–302 (GTWK…GWFM).

Belongs to the TerC family.

The protein localises to the cell membrane. This is an uncharacterized protein from Bacillus subtilis (strain 168).